We begin with the raw amino-acid sequence, 242 residues long: Type III pantothenate kinase (242 aa).

7–14 (DLGNSRFK) is a binding site for ATP. Residues Y91 and 98–101 (GVDR) contribute to the substrate site. The Proton acceptor role is filled by D100. An ATP-binding site is contributed by T121. Residue T171 participates in substrate binding.

The protein belongs to the type III pantothenate kinase family. In terms of assembly, homodimer. The cofactor is NH4(+). It depends on K(+) as a cofactor.

Its subcellular location is the cytoplasm. The catalysed reaction is (R)-pantothenate + ATP = (R)-4'-phosphopantothenate + ADP + H(+). It functions in the pathway cofactor biosynthesis; coenzyme A biosynthesis; CoA from (R)-pantothenate: step 1/5. Its function is as follows. Catalyzes the phosphorylation of pantothenate (Pan), the first step in CoA biosynthesis. The sequence is that of Type III pantothenate kinase from Xanthomonas axonopodis pv. citri (strain 306).